Here is a 122-residue protein sequence, read N- to C-terminus: Prefoldin subunit 1 (122 aa).

It belongs to the prefoldin subunit beta family. Heterohexamer of two PFD-alpha type and four PFD-beta type subunits.

Its function is as follows. Binds specifically to cytosolic chaperonin (c-CPN) and transfers target proteins to it. Binds to nascent polypeptide chain and promotes folding in an environment in which there are many competing pathways for nonnative proteins. This is Prefoldin subunit 1 (pfdn1) from Tetraodon nigroviridis (Spotted green pufferfish).